A 79-amino-acid chain; its full sequence is uncharacterized protein (79 aa).

Residues 1-18 (MQIKNIVAVLATVTAINA) form the signal peptide. The segment at 24–44 (PNATTPNATQPNATQPNTTLP) is disordered. 4 N-linked (GlcNAc...) asparagine glycosylation sites follow: asparagine 25, asparagine 30, asparagine 35, and asparagine 40. The GPI-anchor amidated glycine moiety is linked to residue glycine 55. Residues 56-79 (EAVVNTMAAGAFGAAIAAGVAFLF) constitute a propeptide, removed in mature form.

The protein localises to the cell membrane. This is an uncharacterized protein from Saccharomyces cerevisiae (strain ATCC 204508 / S288c) (Baker's yeast).